The following is a 283-amino-acid chain: Bifunctional protein FolD (283 aa).

NADP(+) contacts are provided by residues 165 to 167, serine 190, and isoleucine 231; that span reads GRS.

It belongs to the tetrahydrofolate dehydrogenase/cyclohydrolase family. In terms of assembly, homodimer.

It catalyses the reaction (6R)-5,10-methylene-5,6,7,8-tetrahydrofolate + NADP(+) = (6R)-5,10-methenyltetrahydrofolate + NADPH. The catalysed reaction is (6R)-5,10-methenyltetrahydrofolate + H2O = (6R)-10-formyltetrahydrofolate + H(+). Its pathway is one-carbon metabolism; tetrahydrofolate interconversion. Functionally, catalyzes the oxidation of 5,10-methylenetetrahydrofolate to 5,10-methenyltetrahydrofolate and then the hydrolysis of 5,10-methenyltetrahydrofolate to 10-formyltetrahydrofolate. The polypeptide is Bifunctional protein FolD (Herminiimonas arsenicoxydans).